A 34-amino-acid chain; its full sequence is Photosystem II reaction center protein Psb30 (34 aa).

A helical membrane pass occupies residues 9–29 (QLIATGTIMLAGPAVIVLLAL).

The protein belongs to the Psb30/Ycf12 family. In terms of assembly, PSII is composed of 1 copy each of membrane proteins PsbA, PsbB, PsbC, PsbD, PsbE, PsbF, PsbH, PsbI, PsbJ, PsbK, PsbL, PsbM, PsbT, PsbX, PsbY, PsbZ, Psb30/Ycf12, peripheral proteins of the oxygen-evolving complex and a large number of cofactors. It forms dimeric complexes.

The protein resides in the plastid. It is found in the chloroplast thylakoid membrane. In terms of biological role, a core subunit of photosystem II (PSII), probably helps stabilize the reaction center. The chain is Photosystem II reaction center protein Psb30 from Phaeodactylum tricornutum (strain CCAP 1055/1).